The primary structure comprises 84 residues: Large ribosomal subunit protein bL27 (84 aa).

It belongs to the bacterial ribosomal protein bL27 family.

The polypeptide is Large ribosomal subunit protein bL27 (Campylobacter jejuni subsp. jejuni serotype O:6 (strain 81116 / NCTC 11828)).